The following is a 436-amino-acid chain: MTSVPIFESVSRFLPPANEDEQYWWKITGQHMARMMHEAGYPEDRQVECLLFHRFKVIPCLGPRPRSDTPWYKSRVGGGAADGCPINYSWRFGTADRKPHIRNFIEPLGALTNTPADPLNEVATKALLQDYSMTLPNVDLEAFWTFAPHYRPRIIEKADIEKLAGASLLVGAEMSPDSHTIDIKAYMYPRVPSQTSQLLTTILPQAMRDAYGENVCLDSLNFVHEFMTKDPQGSQLVLTGTTGIDCCKLQDTRVKIYVITRNTSFDHIAAIMTLGGRRPISEELLGQLKALWYELKGAPAELPSSEQLPVQTKPDGSKNPIVVPFYFDIQPRLALPDVKAYIDVSTSPVSDLAAANAVVRHLEQHGSGQNPKAYLNVLKDITPVEELETQKGVLAFYSVAVKKNELDITSYFNPQVYKRYFAHEVHLNGQRRSVFE.

Belongs to the tryptophan dimethylallyltransferase family.

Its pathway is secondary metabolite biosynthesis. Its function is as follows. Prenyltransferase; part of the gene cluster that mediates the biosynthesis of neosartoricin B, a prenylated anthracenone that probably exhibits T-cell antiproliferative activity, suggestive of a physiological role as an immunosuppressive agent. The non-reducing polyketide synthase nscA probably synthesizes and cyclizes the decaketide backbone. The hydrolase nscB then mediates the product release through hydrolysis followed by spontaneous decarboxylation. The prenyltransferase nscD catalyzes the addition of the dimethylallyl group to the aromatic C5. The FAD-dependent monooxygenase nscC is then responsible for the stereospecific hydroxylation at C2. Neosartoricin B can be converted into two additional compounds neosartoricins C and D. Neosartoricin C is a spirocyclic compound that is cyclized through the attack of C3 hydroxyl on C14, followed by dehydration. On the other hand, neosartoricin D is a further cyclized compound in which attack of C2 on C14 in neosartoricin C results in the formation of the acetal-containing dioxabicyclo-octanone ring. Both of these compounds are novel and possibly represent related metabolites of the gene cluster. The sequence is that of Prenyltransferase nscD from Trichophyton equinum (strain ATCC MYA-4606 / CBS 127.97) (Horse ringworm fungus).